A 24-amino-acid polypeptide reads, in one-letter code: Brevinin-1R (24 aa).

Cys-18 and Cys-24 are joined by a disulfide.

In terms of tissue distribution, expressed by the skin glands.

The protein localises to the secreted. Functionally, antimicrobial peptide. This chain is Brevinin-1R, found in Pelophylax ridibundus (Marsh frog).